The following is a 270-amino-acid chain: Small ribosomal subunit protein eS1 (270 aa).

Disordered stretches follow at residues 1–21 (MAVG…KKKV) and 238–270 (GGGK…QESV).

This sequence belongs to the eukaryotic ribosomal protein eS1 family. In terms of assembly, component of the small ribosomal subunit. Mature ribosomes consist of a small (40S) and a large (60S) subunit. The 40S subunit contains about 33 different proteins and 1 molecule of RNA (18S). The 60S subunit contains about 49 different proteins and 3 molecules of RNA (28S, 5.8S and 5S).

The protein resides in the cytoplasm. This is Small ribosomal subunit protein eS1 from Aedes aegypti (Yellowfever mosquito).